A 241-amino-acid polypeptide reads, in one-letter code: Uridylate kinase (241 aa).

15-18 is an ATP binding site; sequence KLSG. The segment at 23 to 28 is involved in allosteric activation by GTP; it reads GSEGFG. Residue Gly57 participates in UMP binding. ATP-binding residues include Gly58 and Arg62. Residues Asp77 and 138-145 contribute to the UMP site; that span reads TGNPFFTT. Residues Thr165, Phe171, and Asp174 each contribute to the ATP site.

The protein belongs to the UMP kinase family. As to quaternary structure, homohexamer.

The protein localises to the cytoplasm. The catalysed reaction is UMP + ATP = UDP + ADP. Its pathway is pyrimidine metabolism; CTP biosynthesis via de novo pathway; UDP from UMP (UMPK route): step 1/1. Its activity is regulated as follows. Allosterically activated by GTP. Inhibited by UTP. In terms of biological role, catalyzes the reversible phosphorylation of UMP to UDP. This chain is Uridylate kinase, found in Klebsiella pneumoniae subsp. pneumoniae (strain ATCC 700721 / MGH 78578).